We begin with the raw amino-acid sequence, 537 residues long: Beta-arabinofuranosyltransferase RAY1 (537 aa).

The DXD motif motif lies at 370–372 (DVD).

Belongs to the glycosyltransferase 77 family.

Its function is as follows. Beta-arabinofuranosyltransferase that transfers specifically an arabinosyl residue from UDP-arabinofuranose to the monosaccharide galactose or beta-methyl-galactoside in vitro. Catalyzes the addition of a beta-arabinofuranose residue onto a beta-galactosyl residue of an Yariv-precipitable wall polymer in vivo. This Arabidopsis thaliana (Mouse-ear cress) protein is Beta-arabinofuranosyltransferase RAY1.